We begin with the raw amino-acid sequence, 61 residues long: Small ribosomal subunit protein uS14 (61 aa).

Residues cysteine 24, cysteine 27, cysteine 40, and cysteine 43 each contribute to the Zn(2+) site.

This sequence belongs to the universal ribosomal protein uS14 family. Zinc-binding uS14 subfamily. As to quaternary structure, part of the 30S ribosomal subunit. Contacts proteins S3 and S10. It depends on Zn(2+) as a cofactor.

Its function is as follows. Binds 16S rRNA, required for the assembly of 30S particles and may also be responsible for determining the conformation of the 16S rRNA at the A site. This chain is Small ribosomal subunit protein uS14, found in Pelobacter propionicus (strain DSM 2379 / NBRC 103807 / OttBd1).